The primary structure comprises 113 residues: U11-theraphotoxin-Hhn1f (113 aa).

Positions M1–A21 are cleaved as a signal peptide. Residues D22 to R74 constitute a propeptide that is removed on maturation. Positions E61 to C82 are disordered. Cystine bridges form between C75/C90, C82/C95, and C89/C110.

This sequence belongs to the neurotoxin 14 (magi-1) family. 01 (HNTX-16) subfamily. Expressed by the venom gland.

It is found in the secreted. Probable ion channel inhibitor. The protein is U11-theraphotoxin-Hhn1f of Cyriopagopus hainanus (Chinese bird spider).